A 115-amino-acid polypeptide reads, in one-letter code: Tyrosine-protein phosphatase 24 (115 aa).

One can recognise a Tyrosine-protein phosphatase domain in the interval 1–115; the sequence is WMMIVEQKCR…ETGSDAPMVV (115 aa). A substrate-binding site is contributed by Asp83.

This sequence belongs to the protein-tyrosine phosphatase family.

It carries out the reaction O-phospho-L-tyrosyl-[protein] + H2O = L-tyrosyl-[protein] + phosphate. The protein is Tyrosine-protein phosphatase 24 (STY-24) of Styela plicata (Wrinkled sea squirt).